Reading from the N-terminus, the 472-residue chain is Probable diguanylate cyclase DgcF (472 aa).

A run of 8 helical transmembrane segments spans residues 21–41 (SIAI…LRLV), 44–64 (LSLF…YVWL), 90–110 (VSLA…LLVV), 128–148 (LFNY…IGSV), 167–187 (FSTG…GVLP), 198–218 (IALI…SLAF), 237–257 (LLTF…VIDI), and 273–293 (LGIA…AAIN). Residues 330–467 (QHLTVMLLDI…GRNRTSTMRY (138 aa)) form the GGDEF domain. Mg(2+) contacts are provided by Asp338 and Ile339. Asn346, His351, and Asp355 together coordinate substrate. Glu381 is a Mg(2+) binding site.

As to quaternary structure, homodimer. Mg(2+) serves as cofactor.

It is found in the cell membrane. The enzyme catalyses 2 GTP = 3',3'-c-di-GMP + 2 diphosphate. Its pathway is purine metabolism; 3',5'-cyclic di-GMP biosynthesis. Functionally, catalyzes the synthesis of cyclic-di-GMP (c-di-GMP) via the condensation of 2 GTP molecules. The sequence is that of Probable diguanylate cyclase DgcF from Escherichia coli O157:H7.